Here is a 445-residue protein sequence, read N- to C-terminus: Asparagine--tRNA ligase (445 aa).

The protein belongs to the class-II aminoacyl-tRNA synthetase family. Homodimer.

The protein localises to the cytoplasm. The enzyme catalyses tRNA(Asn) + L-asparagine + ATP = L-asparaginyl-tRNA(Asn) + AMP + diphosphate + H(+). The protein is Asparagine--tRNA ligase of Deinococcus deserti (strain DSM 17065 / CIP 109153 / LMG 22923 / VCD115).